A 366-amino-acid polypeptide reads, in one-letter code: Beta sliding clamp (366 aa).

This sequence belongs to the beta sliding clamp family. Forms a ring-shaped head-to-tail homodimer around DNA which binds and tethers DNA polymerases and other proteins to the DNA. The DNA replisome complex has a single clamp-loading complex (3 tau and 1 each of delta, delta', psi and chi subunits) which binds 3 Pol III cores (1 core on the leading strand and 2 on the lagging strand) each with a beta sliding clamp dimer. Additional proteins in the replisome are other copies of gamma, psi and chi, Ssb, DNA helicase and RNA primase.

The protein localises to the cytoplasm. In terms of biological role, confers DNA tethering and processivity to DNA polymerases and other proteins. Acts as a clamp, forming a ring around DNA (a reaction catalyzed by the clamp-loading complex) which diffuses in an ATP-independent manner freely and bidirectionally along dsDNA. Initially characterized for its ability to contact the catalytic subunit of DNA polymerase III (Pol III), a complex, multichain enzyme responsible for most of the replicative synthesis in bacteria; Pol III exhibits 3'-5' exonuclease proofreading activity. The beta chain is required for initiation of replication as well as for processivity of DNA replication. The polypeptide is Beta sliding clamp (dnaN) (Vibrio cholerae serotype O1 (strain ATCC 39315 / El Tor Inaba N16961)).